We begin with the raw amino-acid sequence, 198 residues long: Nucleoid occlusion factor SlmA (198 aa).

An HTH tetR-type domain is found at 9–70; the sequence is RNRREEILQA…SLIEFIEDSL (62 aa). Positions 33–52 form a DNA-binding region, H-T-H motif; sequence TTAKLAANVGVSEAALYRHF. A coiled-coil region spans residues 119–144; that stretch reads DRLQGRINQLFERIEMQLRQVLREKK.

This sequence belongs to the nucleoid occlusion factor SlmA family. Homodimer. Interacts with FtsZ.

Its subcellular location is the cytoplasm. It is found in the nucleoid. Required for nucleoid occlusion (NO) phenomenon, which prevents Z-ring formation and cell division over the nucleoid. Acts as a DNA-associated cell division inhibitor that binds simultaneously chromosomal DNA and FtsZ, and disrupts the assembly of FtsZ polymers. SlmA-DNA-binding sequences (SBS) are dispersed on non-Ter regions of the chromosome, preventing FtsZ polymerization at these regions. The chain is Nucleoid occlusion factor SlmA from Yersinia pseudotuberculosis serotype I (strain IP32953).